The chain runs to 312 residues: Aspartoacylase (312 aa).

Zn(2+)-binding residues include histidine 20 and glutamate 23. Positions 62, 69, and 70 each coordinate N-acetyl-L-aspartate. Histidine 115 lines the Zn(2+) pocket. Positions 163 and 167 each coordinate N-acetyl-L-aspartate. Glutamate 177 (proton donor/acceptor) is an active-site residue. Tyrosine 287 contributes to the N-acetyl-L-aspartate binding site.

It belongs to the AspA/AstE family. Aspartoacylase subfamily. As to quaternary structure, homodimer. Requires Zn(2+) as cofactor. Detected in kidney proximal tubule cells (at protein level).

It localises to the cytoplasm. Its subcellular location is the nucleus. The catalysed reaction is an N-acyl-L-aspartate + H2O = a carboxylate + L-aspartate. It carries out the reaction N-acetyl-L-aspartate + H2O = L-aspartate + acetate. Its function is as follows. Catalyzes the deacetylation of N-acetylaspartic acid (NAA) to produce acetate and L-aspartate. NAA occurs in high concentration in brain and its hydrolysis NAA plays a significant part in the maintenance of intact white matter. In other tissues it acts as a scavenger of NAA from body fluids. The sequence is that of Aspartoacylase from Rattus norvegicus (Rat).